A 519-amino-acid chain; its full sequence is Berghepain-1 (519 aa).

Residues 1 to 32 lie on the Cytoplasmic side of the membrane; that stretch reads MINDIRRINITTSSIESLNENSKYLKRNHKRT. A helical; Signal-anchor for type II membrane protein transmembrane segment spans residues 33-53; the sequence is IKICAYAITTFALFFIVVVYF. Topologically, residues 54 to 519 are lumenal; it reads KNQTNVNDAN…IGIDVFFPIL (466 aa). N-linked (GlcNAc...) asparagine glycosylation is found at asparagine 55 and asparagine 143. 4 disulfides stabilise this stretch: cysteine 298–cysteine 340, cysteine 333–cysteine 373, cysteine 358–cysteine 378, and cysteine 427–cysteine 508. The active site involves cysteine 301. An N-linked (GlcNAc...) asparagine glycan is attached at asparagine 432. Active-site residues include histidine 433 and asparagine 483.

Belongs to the peptidase C1 family.

The protein localises to the membrane. Cysteine protease. Required for host hepatocyte-derived merozoite infectivity and to a lesser extent for host erythrocyte-derived merozoite infectivity. This chain is Berghepain-1, found in Plasmodium berghei (strain Anka).